The following is a 448-amino-acid chain: Protein ECM7 (448 aa).

Residues 1–28 (MVMSRIRDTIARPFQNLTALEKVVQWLR) are Cytoplasmic-facing. A helical transmembrane segment spans residues 29 to 49 (LGTTLLIISFGLALTVGPLSS). The Extracellular segment spans residues 50–204 (PRTLYMSRLD…MRSLKHKKAN (155 aa)). Residues 205 to 225 (VLHLLYAVISFQVCMLFFMIW) traverse the membrane as a helical segment. At 226–246 (YYYIKGRFMNALKERALVHIN) the chain is on the cytoplasmic side. A helical transmembrane segment spans residues 247–267 (SLLSLVVFIGGLISSISLAWV). Over 268 to 287 (NYTIQSRINTELEAFGFSYH) the chain is Extracellular. A helical membrane pass occupies residues 288–308 (LGVTWFALLWCFAGLISVSCL). At 309–448 (AWSGLEWCIS…VIKPSSALQF (140 aa)) the chain is on the cytoplasmic side. 2 stretches are compositionally biased toward polar residues: residues 351–363 (YSQR…STSG) and 383–406 (VDLN…NISN). Disordered stretches follow at residues 351–411 (YSQR…GKHE) and 427–448 (RSSN…ALQF).

It is found in the membrane. May be involved in cell wall organization and biogenesis. The polypeptide is Protein ECM7 (ECM7) (Saccharomyces cerevisiae (strain ATCC 204508 / S288c) (Baker's yeast)).